A 228-amino-acid polypeptide reads, in one-letter code: Triosephosphate isomerase (228 aa).

Position 11 to 13 (N11 to K13) interacts with substrate. Catalysis depends on H95, which acts as the Electrophile. The Proton acceptor role is filled by E143. Substrate contacts are provided by residues I148, G183, and A204–S205.

It belongs to the triosephosphate isomerase family. As to quaternary structure, homotetramer; dimer of dimers.

The protein resides in the cytoplasm. The catalysed reaction is D-glyceraldehyde 3-phosphate = dihydroxyacetone phosphate. It functions in the pathway carbohydrate biosynthesis; gluconeogenesis. The protein operates within carbohydrate degradation; glycolysis; D-glyceraldehyde 3-phosphate from glycerone phosphate: step 1/1. Its function is as follows. Involved in the gluconeogenesis. Catalyzes stereospecifically the conversion of dihydroxyacetone phosphate (DHAP) to D-glyceraldehyde-3-phosphate (G3P). This is Triosephosphate isomerase from Pyrococcus horikoshii (strain ATCC 700860 / DSM 12428 / JCM 9974 / NBRC 100139 / OT-3).